A 246-amino-acid chain; its full sequence is Probable fimbrial chaperone YadV (246 aa).

An N-terminal signal peptide occupies residues 1–25 (MFFNTKHTTALCFVTCMAFSSSSIA).

It belongs to the periplasmic pilus chaperone family.

Its subcellular location is the periplasm. In terms of biological role, part of the yadCKLM-htrE-yadVN fimbrial operon. Could contribute to adhesion to various surfaces in specific environmental niches. The protein is Probable fimbrial chaperone YadV (yadV) of Escherichia coli (strain K12).